The sequence spans 518 residues: uncharacterized protein (518 aa).

ABC transporter domains lie at 4 to 260 (LSVK…QLEA) and 324 to 518 (LIFE…TKVL). Residues 36–43 (GANGEGKS) and 357–364 (GANGIGKT) contribute to the ATP site.

The protein belongs to the ABC transporter superfamily.

This is an uncharacterized protein from Bacillus subtilis (strain 168).